Reading from the N-terminus, the 417-residue chain is UDP-N-acetylglucosamine 1-carboxyvinyltransferase (417 aa).

22–23 serves as a coordination point for phosphoenolpyruvate; sequence KN. Arg93 lines the UDP-N-acetyl-alpha-D-glucosamine pocket. Cys117 acts as the Proton donor in catalysis. Cys117 carries the post-translational modification 2-(S-cysteinyl)pyruvic acid O-phosphothioketal. UDP-N-acetyl-alpha-D-glucosamine contacts are provided by residues 122–126, Asp305, and Ile327; that span reads RPVDQ.

Belongs to the EPSP synthase family. MurA subfamily.

It is found in the cytoplasm. The catalysed reaction is phosphoenolpyruvate + UDP-N-acetyl-alpha-D-glucosamine = UDP-N-acetyl-3-O-(1-carboxyvinyl)-alpha-D-glucosamine + phosphate. It participates in cell wall biogenesis; peptidoglycan biosynthesis. Cell wall formation. Adds enolpyruvyl to UDP-N-acetylglucosamine. This chain is UDP-N-acetylglucosamine 1-carboxyvinyltransferase, found in Dechloromonas aromatica (strain RCB).